Reading from the N-terminus, the 45-residue chain is U1-ctenitoxin-Pk1a (45 aa).

4 disulfides stabilise this stretch: Cys-3–Cys-16, Cys-10–Cys-25, Cys-15–Cys-34, and Cys-27–Cys-32.

As to expression, expressed by the venom gland.

The protein localises to the secreted. Functionally, neurotoxin. Causes rapid general flaccid paralysis and death in mice at dose levels of 5 ug per mouse. The protein is U1-ctenitoxin-Pk1a of Phoneutria keyserlingi (Brazilian wandering spider).